A 530-amino-acid chain; its full sequence is Phosphoenolpyruvate carboxykinase (ATP) (530 aa).

Substrate contacts are provided by arginine 56, tyrosine 196, and lysine 202. ATP-binding positions include lysine 202, histidine 221, and 237-245 (GLSGTGKTT). Residues lysine 202 and histidine 221 each coordinate Mn(2+). Aspartate 258 is a binding site for Mn(2+). ATP is bound by residues glutamate 286, arginine 322, 438 to 439 (RI), and threonine 444. Substrate is bound at residue arginine 322.

The protein belongs to the phosphoenolpyruvate carboxykinase (ATP) family. In terms of assembly, monomer. Mn(2+) serves as cofactor.

The protein localises to the cytoplasm. The enzyme catalyses oxaloacetate + ATP = phosphoenolpyruvate + ADP + CO2. It participates in carbohydrate biosynthesis; gluconeogenesis. Its function is as follows. Involved in the gluconeogenesis. Catalyzes the conversion of oxaloacetate (OAA) to phosphoenolpyruvate (PEP) through direct phosphoryl transfer between the nucleoside triphosphate and OAA. The sequence is that of Phosphoenolpyruvate carboxykinase (ATP) from Photobacterium profundum (strain SS9).